Here is a 491-residue protein sequence, read N- to C-terminus: Ketol-acid reductoisomerase (NADP(+)) (491 aa).

The KARI N-terminal Rossmann domain maps to 17 to 208; the sequence is LGKCRFMSRD…GGHRAGVLES (192 aa). Residues 45-48, Arg-68, Arg-76, Ser-78, and 108-110 each bind NADP(+); these read CGAQ and DKQ. The active site involves His-132. Gly-158 contacts NADP(+). KARI C-terminal knotted domains follow at residues 209 to 344 and 345 to 484; these read SFVA…NYPE and YEGK…MTDM. Mg(2+)-binding residues include Asp-217, Glu-221, Glu-389, and Glu-393. Ser-414 is a binding site for substrate.

The protein belongs to the ketol-acid reductoisomerase family. The cofactor is Mg(2+).

It catalyses the reaction (2R)-2,3-dihydroxy-3-methylbutanoate + NADP(+) = (2S)-2-acetolactate + NADPH + H(+). It carries out the reaction (2R,3R)-2,3-dihydroxy-3-methylpentanoate + NADP(+) = (S)-2-ethyl-2-hydroxy-3-oxobutanoate + NADPH + H(+). It participates in amino-acid biosynthesis; L-isoleucine biosynthesis; L-isoleucine from 2-oxobutanoate: step 2/4. It functions in the pathway amino-acid biosynthesis; L-valine biosynthesis; L-valine from pyruvate: step 2/4. Involved in the biosynthesis of branched-chain amino acids (BCAA). Catalyzes an alkyl-migration followed by a ketol-acid reduction of (S)-2-acetolactate (S2AL) to yield (R)-2,3-dihydroxy-isovalerate. In the isomerase reaction, S2AL is rearranged via a Mg-dependent methyl migration to produce 3-hydroxy-3-methyl-2-ketobutyrate (HMKB). In the reductase reaction, this 2-ketoacid undergoes a metal-dependent reduction by NADPH to yield (R)-2,3-dihydroxy-isovalerate. The polypeptide is Ketol-acid reductoisomerase (NADP(+)) (Proteus mirabilis (strain HI4320)).